We begin with the raw amino-acid sequence, 327 residues long: MANAKPFCLLGFFCLLLQLFSIFHIGNGELEMNYYKESCPKAEEIIRQQVETLYYKHGNTAVSWLRNLFHDCVVKSCDASLLLETARGVESEQKSKRSFGMRNFKYVKIIKDALEKECPSTVSCADIVALSARDGIVMLKGPKIEMIKTGRRDSRGSYLGDVETLIPNHNDSLSSVISTFNSIGIDVEATVALLGAHSVGRVHCVNLVHRLYPTIDPTLDPSYALYLKKRCPSPTPDPNAVLYSRNDRETPMVVDNMYYKNIMAHKGLLVIDDELATDPRTAPFVAKMAADNNYFHEQFSRGVRLLSETNPLTGDQGEIRKDCRYVN.

A signal peptide spans 1 to 28 (MANAKPFCLLGFFCLLLQLFSIFHIGNG). 4 cysteine pairs are disulfide-bonded: C39/C118, C72/C77, C124/C323, and C204/C231. H70 (proton acceptor) is an active-site residue. 4 residues coordinate Ca(2+): D71, V74, D78, and S80. Residue P167 participates in substrate binding. The N-linked (GlcNAc...) asparagine glycan is linked to N170. H197 lines the heme b pocket. S198 contacts Ca(2+). Residues D247, T250, and D255 each contribute to the Ca(2+) site.

It belongs to the peroxidase family. Classical plant (class III) peroxidase subfamily. Requires heme b as cofactor. Ca(2+) serves as cofactor. Preferentially expressed in roots and leaves, slightly in stems.

It carries out the reaction 2 a phenolic donor + H2O2 = 2 a phenolic radical donor + 2 H2O. Removal of H(2)O(2), oxidation of toxic reductants, biosynthesis and degradation of lignin, suberization, auxin catabolism, response to environmental stresses such as wounding, pathogen attack and oxidative stress. These functions might be dependent on each isozyme/isoform in each plant tissue. In terms of biological role, might function as heat shock-like defense protein. May be implicated in the systemic acquired resistance response. In Arabidopsis thaliana (Mouse-ear cress), this protein is Peroxidase 21 (PER21).